The chain runs to 152 residues: Toxin Res (152 aa).

This sequence belongs to the MbcT/ParT/Res family. As to quaternary structure, homodimer. Forms a complex with cognate antitoxin Xre.

In terms of biological role, toxic component of a type II toxin-antitoxin (TA) system. Expression in E.coli inhibits cell growth; bacteriostasis is neutralized by expression of cognate antitoxin Xre. Probably depletes intracellular NAD(+). In Yersinia enterocolitica serotype O:8 / biotype 1B (strain NCTC 13174 / 8081), this protein is Toxin Res.